We begin with the raw amino-acid sequence, 262 residues long: Ribosome-recycling factor, mitochondrial (262 aa).

A mitochondrion-targeting transit peptide spans 1 to 55 (MALGLRCFRLVHPAFCNSLAALTRPVSEVTLQTVRGRQNDHGQCMAYAAVPVRHF).

It belongs to the RRF family.

It is found in the mitochondrion. Responsible for the disassembly of ribosomes from messenger RNA at the termination of mitochondrial protein biosynthesis. Acts in collaboration with GFM2. Promotes mitochondrial ribosome recycling by dissolution of intersubunit contacts. This chain is Ribosome-recycling factor, mitochondrial (MRRF), found in Bos taurus (Bovine).